The chain runs to 330 residues: Aspartate--ammonia ligase (330 aa).

This sequence belongs to the class-II aminoacyl-tRNA synthetase family. AsnA subfamily.

Its subcellular location is the cytoplasm. It carries out the reaction L-aspartate + NH4(+) + ATP = L-asparagine + AMP + diphosphate + H(+). It participates in amino-acid biosynthesis; L-asparagine biosynthesis; L-asparagine from L-aspartate (ammonia route): step 1/1. This Streptococcus agalactiae serotype Ia (strain ATCC 27591 / A909 / CDC SS700) protein is Aspartate--ammonia ligase.